The primary structure comprises 269 residues: Formamidopyrimidine-DNA glycosylase (269 aa).

Catalysis depends on Pro-2, which acts as the Schiff-base intermediate with DNA. Glu-3 acts as the Proton donor in catalysis. The active-site Proton donor; for beta-elimination activity is the Lys-57. DNA contacts are provided by His-90, Arg-109, and Lys-150. The FPG-type zinc finger occupies 235 to 269 (QVYGRKGEPCRVCGTPIVATKHAQRATFYCRHCQK). The Proton donor; for delta-elimination activity role is filled by Arg-259.

The protein belongs to the FPG family. Monomer. The cofactor is Zn(2+).

It carries out the reaction Hydrolysis of DNA containing ring-opened 7-methylguanine residues, releasing 2,6-diamino-4-hydroxy-5-(N-methyl)formamidopyrimidine.. The catalysed reaction is 2'-deoxyribonucleotide-(2'-deoxyribose 5'-phosphate)-2'-deoxyribonucleotide-DNA = a 3'-end 2'-deoxyribonucleotide-(2,3-dehydro-2,3-deoxyribose 5'-phosphate)-DNA + a 5'-end 5'-phospho-2'-deoxyribonucleoside-DNA + H(+). Functionally, involved in base excision repair of DNA damaged by oxidation or by mutagenic agents. Acts as a DNA glycosylase that recognizes and removes damaged bases. Has a preference for oxidized purines, such as 7,8-dihydro-8-oxoguanine (8-oxoG). Has AP (apurinic/apyrimidinic) lyase activity and introduces nicks in the DNA strand. Cleaves the DNA backbone by beta-delta elimination to generate a single-strand break at the site of the removed base with both 3'- and 5'-phosphates. The chain is Formamidopyrimidine-DNA glycosylase from Salmonella newport (strain SL254).